The sequence spans 208 residues: Protein-L-isoaspartate O-methyltransferase (208 aa).

Serine 59 is an active-site residue.

Belongs to the methyltransferase superfamily. L-isoaspartyl/D-aspartyl protein methyltransferase family.

It is found in the cytoplasm. The enzyme catalyses [protein]-L-isoaspartate + S-adenosyl-L-methionine = [protein]-L-isoaspartate alpha-methyl ester + S-adenosyl-L-homocysteine. Catalyzes the methyl esterification of L-isoaspartyl residues in peptides and proteins that result from spontaneous decomposition of normal L-aspartyl and L-asparaginyl residues. It plays a role in the repair and/or degradation of damaged proteins. The chain is Protein-L-isoaspartate O-methyltransferase from Salmonella arizonae (strain ATCC BAA-731 / CDC346-86 / RSK2980).